The primary structure comprises 507 residues: MVTIRADEISNIIRERIEQYNREVTIVNTGTVLQVGDGIARIYGLDEVMAGELVEFEEGTIGIALNLESNNVGVVLMGDGLMIQEGSSVKATGKIAQIPVSEAYLGRVINALANPIDGRGQISASESRLIESPAPGIISRRSVYEPLQTGLIAIDSMIPIGRGQRELIIGDRQTGKTAVATDTILNQQGQNVICVYVAIGQKASSVAQVVTSLQERGAMEYTIVVAETADSPATLQYLAPYTGAALAEYFMYREQHTLIIYDDLSKQAQAYRQMSLLLRRPPGREAYPGDVFYLHSRLLERAAKLSSQLGEGSMTALPIVETQSGDVSAYIPTNVISITDGQIFLSADLFNAGIRPAINVGISVSRVGSAAQIKAMKQVAGKLKLELAQFAELEAFAQFSSDLDKATQNQLARGQRLRELLKQSQSAPLTVEEQIMTIYTGTNGYLDGLEIGQVRTFLVQLRTYLKTNKPQFQEIISSTKTLTPEAESFLKEGIQEQLERFLLQEKL.

ATP is bound at residue 170 to 177; sequence GDRQTGKT. A Phosphothreonine modification is found at Thr-257.

The protein belongs to the ATPase alpha/beta chains family. F-type ATPases have 2 components, CF(1) - the catalytic core - and CF(0) - the membrane proton channel. CF(1) has five subunits: alpha(3), beta(3), gamma(1), delta(1), epsilon(1). CF(0) has four main subunits: a, b, b' and c.

The protein resides in the plastid. The protein localises to the chloroplast thylakoid membrane. It catalyses the reaction ATP + H2O + 4 H(+)(in) = ADP + phosphate + 5 H(+)(out). In terms of biological role, produces ATP from ADP in the presence of a proton gradient across the membrane. The alpha chain is a regulatory subunit. In Lobularia maritima (Sweet alyssum), this protein is ATP synthase subunit alpha, chloroplastic.